We begin with the raw amino-acid sequence, 486 residues long: Pentatricopeptide repeat-containing protein At3g06430, chloroplastic (486 aa).

The N-terminal 36 residues, M1–L36, are a transit peptide targeting the chloroplast. PPR repeat units follow at residues K123–P157, T158–F188, D194–P228, N229–P264, D265–P299, E300–W334, T335–A369, D370–E404, N405–C439, and D440–L470.

The protein belongs to the PPR family. P subfamily.

The protein resides in the plastid. It is found in the chloroplast. In Arabidopsis thaliana (Mouse-ear cress), this protein is Pentatricopeptide repeat-containing protein At3g06430, chloroplastic (EMB2750).